Here is a 65-residue protein sequence, read N- to C-terminus: Hirudin-3B' (65 aa).

The interval 1–3 (VVY) is interaction with thrombin active site. 3 disulfide bridges follow: Cys-6–Cys-14, Cys-16–Cys-28, and Cys-22–Cys-39. The interval 40–65 (VTGEGTPKPQSHNDGDFEEIPEEYLQ) is disordered. An O-linked (GalNAc...) threonine glycan is attached at Thr-45. Positions 55–65 (DFEEIPEEYLQ) are interaction with fibrinogen-binding exosite of thrombin. Acidic residues predominate over residues 55–65 (DFEEIPEEYLQ). Tyr-63 is subject to Sulfotyrosine.

The protein belongs to the protease inhibitor I14 (hirudin) family.

It is found in the secreted. Hirudin is a potent thrombin-specific protease inhibitor. It forms a stable non-covalent complex with alpha-thrombin, thereby abolishing its ability to cleave fibrinogen. This Hirudo medicinalis (Medicinal leech) protein is Hirudin-3B'.